A 233-amino-acid chain; its full sequence is Octanoyltransferase (233 aa).

Residues 36–211 enclose the BPL/LPL catalytic domain; sequence DTTPDEIWLV…EFTRQLGYPT (176 aa). Residues 75–82, 142–144, and 155–157 contribute to the substrate site; these read RGGQVTYH, SLG, and GLA. The active-site Acyl-thioester intermediate is C173.

Belongs to the LipB family.

The protein localises to the cytoplasm. The enzyme catalyses octanoyl-[ACP] + L-lysyl-[protein] = N(6)-octanoyl-L-lysyl-[protein] + holo-[ACP] + H(+). The protein operates within protein modification; protein lipoylation via endogenous pathway; protein N(6)-(lipoyl)lysine from octanoyl-[acyl-carrier-protein]: step 1/2. Its function is as follows. Catalyzes the transfer of endogenously produced octanoic acid from octanoyl-acyl-carrier-protein onto the lipoyl domains of lipoate-dependent enzymes. Lipoyl-ACP can also act as a substrate although octanoyl-ACP is likely to be the physiological substrate. The protein is Octanoyltransferase of Yersinia pseudotuberculosis serotype O:3 (strain YPIII).